The chain runs to 317 residues: Large ribosomal subunit protein uL10 (317 aa).

A compositionally biased stretch (low complexity) spans 280–290 (SASAAPAAGGA). The interval 280–317 (SASAAPAAGGATEKKEEAKKPESESEEEDDDMGFGLFD) is disordered. The segment covering 291 to 302 (TEKKEEAKKPES) has biased composition (basic and acidic residues). Serine 302 is subject to Phosphoserine. Serine 304 is subject to Phosphoserine; by CK1.

It belongs to the universal ribosomal protein uL10 family. In terms of assembly, P0 forms a pentameric complex by interaction with dimers of P1 and P2.

The protein localises to the cytoplasm. It localises to the nucleus. In terms of biological role, ribosomal protein P0 is the functional equivalent of E.coli protein L10. This Drosophila melanogaster (Fruit fly) protein is Large ribosomal subunit protein uL10 (RpLP0).